Consider the following 384-residue polypeptide: Chaperone protein DnaJ (384 aa).

Residues D5–G69 form the J domain. A CR-type zinc finger spans residues G141 to K223. 8 residues coordinate Zn(2+): C154, C157, C171, C174, C197, C200, C211, and C214. CXXCXGXG motif repeat units lie at residues C154–G161, C171–G178, C197–G204, and C211–G218.

The protein belongs to the DnaJ family. As to quaternary structure, homodimer. The cofactor is Zn(2+).

The protein resides in the cytoplasm. Functionally, participates actively in the response to hyperosmotic and heat shock by preventing the aggregation of stress-denatured proteins and by disaggregating proteins, also in an autonomous, DnaK-independent fashion. Unfolded proteins bind initially to DnaJ; upon interaction with the DnaJ-bound protein, DnaK hydrolyzes its bound ATP, resulting in the formation of a stable complex. GrpE releases ADP from DnaK; ATP binding to DnaK triggers the release of the substrate protein, thus completing the reaction cycle. Several rounds of ATP-dependent interactions between DnaJ, DnaK and GrpE are required for fully efficient folding. Also involved, together with DnaK and GrpE, in the DNA replication of plasmids through activation of initiation proteins. The protein is Chaperone protein DnaJ of Lactobacillus acidophilus (strain ATCC 700396 / NCK56 / N2 / NCFM).